The primary structure comprises 328 residues: MSSEMLPASIESPNVEEKLGTSDGEEERQEPRVDAGAEPISKRQLKKLMKQKQWEEQREQRKEKRKEKRKRKKLERRQLESNSDGNDRKRVRRDVARSSLRLVIDCSFDDLMVLKDIKKLHKQIQRCYAENRRASHPVQFYLTSHGGQLKKNMDENDQGWVNWKDIHIKSEHYSELIKKEDLVYLTSDSPNVLKDLDESKAYVIGGLVDHSHHKGLTFKQATSYGIEHAQLPLADFVKMNSRKVLAVNHVFEIILEFLETRDWQEAFFTILPQRKGAVPAHKACESSPQDHQSLPEGWDSASEGESCRDNPDSPQKDEQGQQSSPVLQ.

2 disordered regions span residues 1-91 (MSSE…RKRV) and 281-328 (HKAC…PVLQ). S22 is modified (phosphoserine). The stretch at 43-83 (RQLKKLMKQKQWEEQREQRKEKRKEKRKRKKLERRQLESNS) forms a coiled coil. The span at 52 to 62 (KQWEEQREQRK) shows a compositional bias: basic and acidic residues. Residues 63 to 75 (EKRKEKRKRKKLE) are compositionally biased toward basic residues. An SAM-dependent MTase TRM10-type domain is found at 88–278 (RKRVRRDVAR…TILPQRKGAV (191 aa)). Basic and acidic residues predominate over residues 305–319 (ESCRDNPDSPQKDEQ).

The protein belongs to the class IV-like SAM-binding methyltransferase superfamily. TRM10 family. Interacts with tRNA.

It localises to the nucleus. Its subcellular location is the nucleolus. It carries out the reaction guanosine(9) in tRNA + S-adenosyl-L-methionine = N(1)-methylguanosine(9) in tRNA + S-adenosyl-L-homocysteine + H(+). In terms of biological role, S-adenosyl-L-methionine-dependent guanine N(1)-methyltransferase that catalyzes the formation of N(1)-methylguanine at position 9 (m1G9) in tRNAs. Probably not able to catalyze formation of N(1)-methyladenine at position 9 (m1A9) in tRNAs. The chain is tRNA methyltransferase 10 homolog A (Trmt10a) from Mus musculus (Mouse).